Here is a 181-residue protein sequence, read N- to C-terminus: Probable calcium-binding protein CML16 (181 aa).

The interval 1–24 is disordered; sequence MSNTTEKKMPQQQQVERPTALAPA. EF-hand domains are found at residues 23-58, 63-98, 100-135, and 136-171; these read PADA…IAPP, AGGR…GRGD, EHEA…IGEG, and CSAE…DAAA. Ca(2+)-binding residues include Asp-36, Asp-38, Asp-40, Arg-42, Glu-47, Asp-76, Asp-78, Asp-80, Glu-87, Asp-113, Asp-115, Asp-117, Arg-119, Glu-124, Asp-149, Asp-151, Asp-153, Cys-155, and Glu-160.

Functionally, potential calcium sensor. The protein is Probable calcium-binding protein CML16 (CML16) of Oryza sativa subsp. japonica (Rice).